The primary structure comprises 358 residues: Dynein axonemal assembly factor 10 (358 aa).

WD repeat units lie at residues 63–105 (EKKH…QPVF), 109–154 (AHAS…APVA), 162–205 (NNVR…VRWE), 207–249 (NVRN…PKKG), 258–298 (TAGA…QRKV), and 320–358 (ISTQ…LNKV).

In terms of assembly, interacts with PIH1D1; the interaction associates DNAAF10 with the R2TP complex. Interacts with several dynein axonemal assembly factors.

The protein resides in the dynein axonemal particle. Its function is as follows. Key assembly factor specifically required for the stability of axonemal dynein heavy chains in cytoplasm. The polypeptide is Dynein axonemal assembly factor 10 (dnaaf10) (Chlamydomonas reinhardtii (Chlamydomonas smithii)).